A 292-amino-acid polypeptide reads, in one-letter code: Ribosomal protein L11 methyltransferase (292 aa).

The S-adenosyl-L-methionine site is built by threonine 143, glycine 164, aspartate 186, and asparagine 228.

It belongs to the methyltransferase superfamily. PrmA family.

Its subcellular location is the cytoplasm. The catalysed reaction is L-lysyl-[protein] + 3 S-adenosyl-L-methionine = N(6),N(6),N(6)-trimethyl-L-lysyl-[protein] + 3 S-adenosyl-L-homocysteine + 3 H(+). Methylates ribosomal protein L11. In Tolumonas auensis (strain DSM 9187 / NBRC 110442 / TA 4), this protein is Ribosomal protein L11 methyltransferase.